An 87-amino-acid polypeptide reads, in one-letter code: UPF0213 protein SSA_0709 (87 aa).

Residues 3–78 (NKAYMYVLEC…KKKTRQAKLA (76 aa)) form the GIY-YIG domain.

The protein belongs to the UPF0213 family.

The polypeptide is UPF0213 protein SSA_0709 (Streptococcus sanguinis (strain SK36)).